We begin with the raw amino-acid sequence, 131 residues long: MINDIISDSLTRIRNAGMRKLETTKLLHSKVIEALVGIFQAKGYIESFNVIEEDKKKFINVVLKYDEKGKSVINELKRISKPGRRVYKGKDEIKRFKNGYGTIVVSTSHGVLANDEAYKAGVGGEILCTIW.

It belongs to the universal ribosomal protein uS8 family. As to quaternary structure, part of the 30S ribosomal subunit. Contacts proteins S5 and S12.

Functionally, one of the primary rRNA binding proteins, it binds directly to 16S rRNA central domain where it helps coordinate assembly of the platform of the 30S subunit. This Campylobacter jejuni (strain RM1221) protein is Small ribosomal subunit protein uS8.